The primary structure comprises 390 residues: Isoaspartyl dipeptidase (390 aa).

The Zn(2+) site is built by H68 and H70. Residues 75 to 77 (GGE), T106, and Y137 contribute to the substrate site. K162 is a Zn(2+) binding site. At K162 the chain carries N6-carboxylysine. R169 contributes to the substrate binding site. 2 residues coordinate Zn(2+): H201 and H230. Residue R233 participates in substrate binding. Zn(2+) is bound at residue D285. D285 functions as the Proton acceptor in the catalytic mechanism. Substrate is bound at residue S289.

The protein belongs to the peptidase M38 family. It depends on Zn(2+) as a cofactor. Requires Co(2+) as cofactor. In terms of processing, carboxylation allows a single lysine to coordinate two zinc ions.

The protein localises to the cytoplasm. P-hydroxymercuribenzoate causes a slight inhibition (8 to 17 %). Iodoacetamide, o-iodosobenzoate and ammonium persulfate do not inhibit the enzyme activity. Catalyzes the hydrolytic cleavage of a subset of L-isoaspartyl (L-beta-aspartyl) dipeptides. Used to degrade proteins damaged by L-isoaspartyl residues formation. The best substrate for the enzyme reported thus far is iso-Asp-Leu. The chain is Isoaspartyl dipeptidase (iadA) from Escherichia coli (strain K12).